The primary structure comprises 281 residues: NADPH-dependent 7-cyano-7-deazaguanine reductase (281 aa).

A substrate-binding site is contributed by 88–90; the sequence is VES. Residue 90 to 91 participates in NADPH binding; it reads SK. The active-site Thioimide intermediate is Cys189. Asp196 functions as the Proton donor in the catalytic mechanism. 228–229 lines the substrate pocket; it reads HE. 257 to 258 serves as a coordination point for NADPH; it reads RG.

The protein belongs to the GTP cyclohydrolase I family. QueF type 2 subfamily. Homodimer.

Its subcellular location is the cytoplasm. The catalysed reaction is 7-aminomethyl-7-carbaguanine + 2 NADP(+) = 7-cyano-7-deazaguanine + 2 NADPH + 3 H(+). Its pathway is tRNA modification; tRNA-queuosine biosynthesis. In terms of biological role, catalyzes the NADPH-dependent reduction of 7-cyano-7-deazaguanine (preQ0) to 7-aminomethyl-7-deazaguanine (preQ1). This chain is NADPH-dependent 7-cyano-7-deazaguanine reductase, found in Klebsiella pneumoniae (strain 342).